A 305-amino-acid polypeptide reads, in one-letter code: Probable 5-dehydro-4-deoxyglucarate dehydratase (305 aa).

Belongs to the DapA family.

The enzyme catalyses 5-dehydro-4-deoxy-D-glucarate + H(+) = 2,5-dioxopentanoate + CO2 + H2O. The protein operates within carbohydrate acid metabolism; D-glucarate degradation; 2,5-dioxopentanoate from D-glucarate: step 2/2. The protein is Probable 5-dehydro-4-deoxyglucarate dehydratase of Xanthomonas campestris pv. campestris (strain B100).